The sequence spans 245 residues: 1-(5-phosphoribosyl)-5-[(5-phosphoribosylamino)methylideneamino] imidazole-4-carboxamide isomerase (245 aa).

The Proton acceptor role is filled by aspartate 7. The active-site Proton donor is aspartate 129.

This sequence belongs to the HisA/HisF family.

Its subcellular location is the cytoplasm. It catalyses the reaction 1-(5-phospho-beta-D-ribosyl)-5-[(5-phospho-beta-D-ribosylamino)methylideneamino]imidazole-4-carboxamide = 5-[(5-phospho-1-deoxy-D-ribulos-1-ylimino)methylamino]-1-(5-phospho-beta-D-ribosyl)imidazole-4-carboxamide. Its pathway is amino-acid biosynthesis; L-histidine biosynthesis; L-histidine from 5-phospho-alpha-D-ribose 1-diphosphate: step 4/9. This Psychromonas ingrahamii (strain DSM 17664 / CCUG 51855 / 37) protein is 1-(5-phosphoribosyl)-5-[(5-phosphoribosylamino)methylideneamino] imidazole-4-carboxamide isomerase.